The following is a 662-amino-acid chain: Protein distal antenna (662 aa).

One can recognise an HTH psq-type domain in the interval 21–72; the sequence is TKGKRPLRHLTATDKIDAIQRIHDGESKASVARDIGVPESTLRGWCKNEEKL. A DNA-binding region (H-T-H motif) is located at residues 48–68; that stretch reads KASVARDIGVPESTLRGWCKN. Disordered stretches follow at residues 265–299, 348–407, 491–537, and 558–596; these read RNAR…STPS, YSQM…PEDT, PEDL…DDEV, and QSSP…KSTC. The span at 349-391 shows a compositional bias: low complexity; sequence SQMPRPSSPQQPQSTPPTTTTTQQQQPQSSTPPTATPPIVSTP. A compositionally biased stretch (polar residues) spans 511-520; sequence FNPSPSTSIK. The segment covering 527-536 has biased composition (acidic residues); the sequence is VDEDEDEDDE.

Homomers. Interacts with itself, danr, ey and dac to form a complex (or complexes) containing the RD factors.

Its subcellular location is the nucleus. In terms of biological role, probable transcription factor with a role in the retinal determination (RD) network. Contributes to differentiation of antenna-specific characteristics. The chain is Protein distal antenna from Culex quinquefasciatus (Southern house mosquito).